Reading from the N-terminus, the 308-residue chain is Acetyl-coenzyme A carboxylase carboxyl transferase subunit beta (308 aa).

A CoA carboxyltransferase N-terminal domain is found at 25 to 294 (VWTKCTSCEQ…PLVVSVNDSP (270 aa)). Zn(2+)-binding residues include C29, C32, C48, and C51. A C4-type zinc finger spans residues 29 to 51 (CTSCEQVLYHAELERNLEVCPKC).

The protein belongs to the AccD/PCCB family. As to quaternary structure, acetyl-CoA carboxylase is a heterohexamer composed of biotin carboxyl carrier protein (AccB), biotin carboxylase (AccC) and two subunits each of ACCase subunit alpha (AccA) and ACCase subunit beta (AccD). It depends on Zn(2+) as a cofactor.

Its subcellular location is the cytoplasm. It catalyses the reaction N(6)-carboxybiotinyl-L-lysyl-[protein] + acetyl-CoA = N(6)-biotinyl-L-lysyl-[protein] + malonyl-CoA. The protein operates within lipid metabolism; malonyl-CoA biosynthesis; malonyl-CoA from acetyl-CoA: step 1/1. In terms of biological role, component of the acetyl coenzyme A carboxylase (ACC) complex. Biotin carboxylase (BC) catalyzes the carboxylation of biotin on its carrier protein (BCCP) and then the CO(2) group is transferred by the transcarboxylase to acetyl-CoA to form malonyl-CoA. This Vibrio vulnificus (strain CMCP6) protein is Acetyl-coenzyme A carboxylase carboxyl transferase subunit beta.